The chain runs to 199 residues: UPF0462 protein C4orf33 homolog (199 aa).

The protein belongs to the UPF0462 family.

This chain is UPF0462 protein C4orf33 homolog, found in Rattus norvegicus (Rat).